The sequence spans 464 residues: NADH dehydrogenase [ubiquinone] flavoprotein 1, mitochondrial (464 aa).

The transit peptide at 1 to 20 directs the protein to the mitochondrion; it reads MLATRRLLGWSLPARVSVRF. Lys81 bears the N6-acetyllysine; alternate mark. Lys81 carries the N6-succinyllysine; alternate modification. 87–96 serves as a coordination point for NADH; that stretch reads GRGGAGFPTG. The residue at position 104 (Lys104) is an N6-acetyllysine. 199–247 serves as a coordination point for FMN; the sequence is RGAGAYICGEETALIESIEGKQGKPRLKPPFPADVGVFGCPTTVANVET. At Arg257 the chain carries Omega-N-methylarginine. Lys375 is modified (N6-acetyllysine). The [4Fe-4S] cluster site is built by Cys379, Cys382, Cys385, and Cys425.

It belongs to the complex I 51 kDa subunit family. Core subunit of respiratory chain NADH dehydrogenase (Complex I) which is composed of 45 different subunits. This is a component of the flavoprotein-sulfur (FP) fragment of the enzyme. Interacts with RAB5IF. FMN serves as cofactor. [4Fe-4S] cluster is required as a cofactor.

It localises to the mitochondrion inner membrane. The enzyme catalyses a ubiquinone + NADH + 5 H(+)(in) = a ubiquinol + NAD(+) + 4 H(+)(out). Core subunit of the mitochondrial membrane respiratory chain NADH dehydrogenase (Complex I) which catalyzes electron transfer from NADH through the respiratory chain, using ubiquinone as an electron acceptor. Part of the peripheral arm of the enzyme, where the electrons from NADH are accepted by flavin mononucleotide (FMN) and then passed along a chain of iron-sulfur clusters by electron tunnelling to the final acceptor ubiquinone. Contains FMN, which is the initial electron acceptor as well as one iron-sulfur cluster. In Pan troglodytes (Chimpanzee), this protein is NADH dehydrogenase [ubiquinone] flavoprotein 1, mitochondrial.